A 181-amino-acid chain; its full sequence is MSQPAVAKRYALALFQLATEKQMIDEMQDQLQIVEEVFAKTPELMDVLTHPKITIERKKQFVSEAFAELSPTVQHTVLLLLERHRIQIVSEMVKEYRFLANEVRGVADATVYSVKPLSADEKRAISQSFASKVGKHTLNISNIVDKSLIGGVKLRIGNRIYDGSISSKLETIHRGLLAHRS.

The protein belongs to the ATPase delta chain family. As to quaternary structure, F-type ATPases have 2 components, F(1) - the catalytic core - and F(0) - the membrane proton channel. F(1) has five subunits: alpha(3), beta(3), gamma(1), delta(1), epsilon(1). F(0) has three main subunits: a(1), b(2) and c(10-14). The alpha and beta chains form an alternating ring which encloses part of the gamma chain. F(1) is attached to F(0) by a central stalk formed by the gamma and epsilon chains, while a peripheral stalk is formed by the delta and b chains.

The protein resides in the cell membrane. F(1)F(0) ATP synthase produces ATP from ADP in the presence of a proton or sodium gradient. F-type ATPases consist of two structural domains, F(1) containing the extramembraneous catalytic core and F(0) containing the membrane proton channel, linked together by a central stalk and a peripheral stalk. During catalysis, ATP synthesis in the catalytic domain of F(1) is coupled via a rotary mechanism of the central stalk subunits to proton translocation. Its function is as follows. This protein is part of the stalk that links CF(0) to CF(1). It either transmits conformational changes from CF(0) to CF(1) or is implicated in proton conduction. This chain is ATP synthase subunit delta, found in Priestia megaterium (strain ATCC 12872 / QMB1551) (Bacillus megaterium).